The primary structure comprises 136 residues: Large ribosomal subunit protein uL13 (136 aa).

Belongs to the universal ribosomal protein uL13 family. Part of the 50S ribosomal subunit.

In terms of biological role, this protein is one of the early assembly proteins of the 50S ribosomal subunit, although it is not seen to bind rRNA by itself. It is important during the early stages of 50S assembly. The chain is Large ribosomal subunit protein uL13 from Thermoplasma acidophilum (strain ATCC 25905 / DSM 1728 / JCM 9062 / NBRC 15155 / AMRC-C165).